Here is a 1525-residue protein sequence, read N- to C-terminus: MLSSFCGDGHPFSTGLPNVSICAQHTVLVWVPAAFFLLTLPFLSAQCHLTAQRFARLPFSAHFIIKLLLVAFLAANSLATWCYVLFSKNSYAAAYYVYPGLWVLVWTGTFLVHLIRLRCGLVSSGIQHVTSLIFLLCGAPEFYQWIRMENSNSFPNDLTTTDSAQFLSIAYLSWYSALILYTFSLCFADPRGAKTDDEKASSKSAASPELQSSFLNRLTLWWFNSIPWTGARRDLEIDDIFELNERSGTEFLSELWESFWEPKRLKYIHDTSIWAKKDPSEQEKDPVVIPSVVSSLFMMFRWEFLLASTLKFVSDTMQFASPFLLHELLNFISAKNAPFWKGMALSILMFSVSELRSLILNGYFYIMFRMGTKIQTSLTAAVYKKTLLISNSARRDRTVGEIVNLMAIDVERFQMITPQIQQFWSCPYQITFALVYLFITLGYSALPGVVIMVIFVPMNIISSMIVRKWQIEQMKLKDERTKMVNEVLNGIKVVKLYAWEVPMEAYIDEIRTKELALIKKSAMVRNILDSFNTASPFLVALFSFGTFVLSNPSHLLTPQIAFVSLALFNQLRSPMTMIALLINQAVQAVVSNKRLKEFLVAEELDEKCVDRSVNIERSHNAVRVENLTASWDPEEAAGEKTLQDVDLTAPRNSLIAVVGKVGSGKSSLLQALLGEMGKLRGRIGVNGRVAYVPQQPWIQNMTLRDNITFGRPFDRKRYDQVLYACALKADIKILPAGDQTEIGEKGINLSGGQKARVSLARAVYQNLDVYLLDDPLSAVDAHVGRHIFEKVIGPNGLLREKTRILVTHGLTYTKMADEILVMLEGKIEESGTFEHLIKRRGLFFDFMEEYKSGSDNSSEAGGSQDDDFEAIGGEIQDYMNPEDVVLTVTNDLDETIRTPELTTQISTMSSPEKPPTGTSPAAATESQNKLIKKEGIAQGKVEIATYQLYVKAAGYLLSIAFIGFFIVYMTLQILRSFWLSAWSDEYDPDSPSAHPMAKGWRLGVYGALGFSETACFFVALLALVFVGQRASKNLHGPLIHNLMRSPMSFYDTTPLGRILNRCAKDIETIDMMLPMNFRYLVMCVLQVAFTLIVIIISTPLFAVVILPLALIYLIFLRYYVPTSRQLKRLESVHRSPIYSHFGETIQGAASIRAFGKVDEFRQDSGRILDTFIRCRYSSLVSNRWLAVRLEFVGNCIIFFAALFAVLSKEFGWITSPGVIGVSVSYALNITEVLNFAVRQVSEIEANIVSVERVNEYTNTPNEAPWRIEGREPAPGWPSRGVVKFDGYSTRYREGLDLVLHDISADVAAGEKIGIVGRTGAGKSSFALALFRMIEAAGGRIVIDDVEVSQIGLHDLRSNITIIPQDPVLFSGTLRFNLDPFFTYSDDQIWRALELAHLKHFAAGLPDGLLYKISEAGENLSVGQRQLVALARALLRHTRVLVLDEATAAVDVATDALIQETIREEFKECTVFTIAHRLNTIMDYDRIMVLDKGSILEFDTPDALMADKNSAFAKMVADAAEQDKHE.

Residues 1–24 lie on the Extracellular side of the membrane; sequence MLSSFCGDGHPFSTGLPNVSICAQ. N18 is a glycosylation site (N-linked (GlcNAc...) asparagine). A helical membrane pass occupies residues 25-45; that stretch reads HTVLVWVPAAFFLLTLPFLSA. Residues 46-66 lie on the Cytoplasmic side of the membrane; that stretch reads QCHLTAQRFARLPFSAHFIIK. The chain crosses the membrane as a helical span at residues 67 to 87; that stretch reads LLLVAFLAANSLATWCYVLFS. The Extracellular portion of the chain corresponds to 88–94; that stretch reads KNSYAAA. The chain crosses the membrane as a helical span at residues 95–115; the sequence is YYVYPGLWVLVWTGTFLVHLI. The Cytoplasmic portion of the chain corresponds to 116–118; sequence RLR. Residues 119–139 form a helical membrane-spanning segment; the sequence is CGLVSSGIQHVTSLIFLLCGA. The Extracellular segment spans residues 140–165; sequence PEFYQWIRMENSNSFPNDLTTTDSAQ. Residues 166-186 form a helical membrane-spanning segment; that stretch reads FLSIAYLSWYSALILYTFSLC. At 187–346 the chain is on the cytoplasmic side; the sequence is FADPRGAKTD…APFWKGMALS (160 aa). The ABC transmembrane type-1 1 domain occupies 305 to 587; that stretch reads LLASTLKFVS…IALLINQAVQ (283 aa). Residues 347–367 form a helical membrane-spanning segment; the sequence is ILMFSVSELRSLILNGYFYIM. The Extracellular portion of the chain corresponds to 368–434; sequence FRMGTKIQTS…SCPYQITFAL (67 aa). The chain crosses the membrane as a helical span at residues 435-455; sequence VYLFITLGYSALPGVVIMVIF. Residues 456–535 lie on the Cytoplasmic side of the membrane; that stretch reads VPMNIISSMI…NILDSFNTAS (80 aa). Residues 536–556 traverse the membrane as a helical segment; it reads PFLVALFSFGTFVLSNPSHLL. The Extracellular portion of the chain corresponds to 557–561; sequence TPQIA. A helical transmembrane segment spans residues 562–582; sequence FVSLALFNQLRSPMTMIALLI. Topologically, residues 583-953 are cytoplasmic; sequence NQAVQAVVSN…ATYQLYVKAA (371 aa). One can recognise an ABC transporter 1 domain in the interval 622–849; sequence VRVENLTASW…RGLFFDFMEE (228 aa). Position 659–666 (659–666) interacts with ATP; the sequence is GKVGSGKS. The disordered stretch occupies residues 900 to 925; the sequence is ELTTQISTMSSPEKPPTGTSPAAATE. Residues 954–974 form a helical membrane-spanning segment; the sequence is GYLLSIAFIGFFIVYMTLQIL. Residues 959 to 1245 enclose the ABC transmembrane type-1 2 domain; it reads IAFIGFFIVY…AVRQVSEIEA (287 aa). Residues 975–1005 are Extracellular-facing; sequence RSFWLSAWSDEYDPDSPSAHPMAKGWRLGVY. The helical transmembrane segment at 1006–1026 threads the bilayer; the sequence is GALGFSETACFFVALLALVFV. Topologically, residues 1027 to 1068 are cytoplasmic; it reads GQRASKNLHGPLIHNLMRSPMSFYDTTPLGRILNRCAKDIET. A helical transmembrane segment spans residues 1069–1089; that stretch reads IDMMLPMNFRYLVMCVLQVAF. Residue T1090 is a topological domain, extracellular. The chain crosses the membrane as a helical span at residues 1091–1111; the sequence is LIVIIISTPLFAVVILPLALI. The Cytoplasmic segment spans residues 1112-1184; that stretch reads YLIFLRYYVP…RYSSLVSNRW (73 aa). The chain crosses the membrane as a helical span at residues 1185–1205; that stretch reads LAVRLEFVGNCIIFFAALFAV. Residues 1206–1525 are Extracellular-facing; the sequence is LSKEFGWITS…ADAAEQDKHE (320 aa). N-linked (GlcNAc...) asparagine glycosylation occurs at N1228. An ABC transporter 2 domain is found at 1282–1516; that stretch reads VKFDGYSTRY…KNSAFAKMVA (235 aa). 1316 to 1323 contacts ATP; sequence GRTGAGKS. N1358 and N1418 each carry an N-linked (GlcNAc...) asparagine glycan.

The protein belongs to the ABC transporter superfamily. ABCC family. Conjugate transporter (TC 3.A.1.208) subfamily. In terms of tissue distribution, expressed in head neurons, including the dopamine (DA) motor neuron, and other cells in the body.

It is found in the cell membrane. Negatively regulates cellular toxicity by mediating the export of environmental toxicants such as methylmercury out of the cell. Plays a role in inhibiting methylmercury-induced dopamine (DA) motor neuron degeneration. Not involved in Mn(2+)- or Al(3+)-associated toxicity. In Caenorhabditis elegans, this protein is Multidrug resistance protein mrp-7.